We begin with the raw amino-acid sequence, 501 residues long: G protein-activated inward rectifier potassium channel 1 (501 aa).

The interval 1-40 is disordered; that stretch reads MSALRRKFGDDYQVVTTSSSGSGLQPQGPGQGPQQQLVPK. At 1 to 80 the chain is on the cytoplasmic side; it reads MSALRRKFGD…LFTTLVDLKW (80 aa). Positions 18–37 are enriched in low complexity; the sequence is SSSGSGLQPQGPGQGPQQQL. A helical transmembrane segment spans residues 81 to 105; that stretch reads RWNLFIFILTYTVAWLFMASMWWVI. The Extracellular segment spans residues 106–129; sequence AYTRGDLNKAHVGNYTPCVANVYN. N119 carries N-linked (GlcNAc...) asparagine glycosylation. Positions 130–141 form an intramembrane region, helical; Pore-forming; that stretch reads FPSAFLFFIETE. The pore-forming intramembrane region spans 142-148; the sequence is ATIGYGY. Residues 143-148 carry the Selectivity filter motif; the sequence is TIGYGY. Over 149-157 the chain is Extracellular; that stretch reads RYITDKCPE. Residues 158-179 form a helical membrane-spanning segment; the sequence is GIILFLFQSILGSIVDAFLIGC. Over 180-501 the chain is Cytoplasmic; the sequence is MFIKMSQPKK…LRKMNSDRFT (322 aa). The interval 182-209 is polyphosphoinositide (PIP2)-binding; the sequence is IKMSQPKKRAETLMFSEHAVISMRDGKL. 2 positions are modified to phosphoserine: S385 and S424.

The protein belongs to the inward rectifier-type potassium channel (TC 1.A.2.1) family. KCNJ3 subfamily. As to quaternary structure, associates with KCNJ5/GIRK4 or KCNJ6/GIRK2 or KCNJ9/GIRK3 to form a G-protein activated heteromultimer pore-forming unit. The resulting inward current is much larger.

Its subcellular location is the membrane. It carries out the reaction K(+)(in) = K(+)(out). Heteromultimer composed of KCNJ3/GIRK1 and KCNJ5/GIRK4 is activated by phosphatidylinositol 4,5 biphosphate (PtdIns(4,5)P2). In terms of biological role, inward rectifier potassium channels are characterized by a greater tendency to allow potassium to flow into the cell rather than out of it. Their voltage dependence is regulated by the concentration of extracellular potassium; as external potassium is raised, the voltage range of the channel opening shifts to more positive voltages. The inward rectification is mainly due to the blockage of outward current by internal magnesium. This potassium channel is controlled by G proteins. This receptor plays a crucial role in regulating the heartbeat. This Bos taurus (Bovine) protein is G protein-activated inward rectifier potassium channel 1 (KCNJ3).